The primary structure comprises 83 residues: Retinal cone rhodopsin-sensitive cGMP 3',5'-cyclic phosphodiesterase subunit gamma (83 aa).

The disordered stretch occupies residues 1-51; the sequence is MSDSPCLSPPAPSQGPTTPRKGPPKFKQRQTRQFKSKPPKKGVKGFGDDIP. A compositionally biased stretch (basic residues) spans 22 to 43; sequence GPPKFKQRQTRQFKSKPPKKGV.

It belongs to the rod/cone cGMP-PDE gamma subunit family. As to quaternary structure, tetramer composed of two catalytic chains (alpha and beta), and two inhibitory chains (gamma).

It carries out the reaction 3',5'-cyclic GMP + H2O = GMP + H(+). Participates in processes of transmission and amplification of the visual signal. cGMP-PDEs are the effector molecules in G-protein-mediated phototransduction in vertebrate rods and cones. In Rattus norvegicus (Rat), this protein is Retinal cone rhodopsin-sensitive cGMP 3',5'-cyclic phosphodiesterase subunit gamma (Pde6h).